The primary structure comprises 268 residues: Tubulin-specific chaperone C (268 aa).

The region spanning 98–255 (PAYTTTLKKH…SAFAFEDFDI (158 aa)) is the C-CAP/cofactor C-like domain.

It localises to the cytoplasm. It is found in the cytoskeleton. Functionally, tubulin-folding protein; involved in the early step of the tubulin folding pathway. The protein is Tubulin-specific chaperone C (CIN2) of Saccharomyces cerevisiae (strain ATCC 204508 / S288c) (Baker's yeast).